A 99-amino-acid polypeptide reads, in one-letter code: Nucleoid-associated protein Cj1642 (99 aa).

The protein belongs to the YbaB/EbfC family. In terms of assembly, homodimer.

The protein resides in the cytoplasm. It is found in the nucleoid. In terms of biological role, binds to DNA and alters its conformation. May be involved in regulation of gene expression, nucleoid organization and DNA protection. This Campylobacter jejuni subsp. jejuni serotype O:2 (strain ATCC 700819 / NCTC 11168) protein is Nucleoid-associated protein Cj1642.